Consider the following 427-residue polypeptide: Serine hydroxymethyltransferase (427 aa).

(6S)-5,6,7,8-tetrahydrofolate-binding positions include Leu122 and 126–128; that span reads GHL. Lys231 is modified (N6-(pyridoxal phosphate)lysine). (6S)-5,6,7,8-tetrahydrofolate-binding positions include Glu247 and 355 to 357; that span reads SPF.

Belongs to the SHMT family. As to quaternary structure, homodimer. Pyridoxal 5'-phosphate is required as a cofactor.

It localises to the cytoplasm. It catalyses the reaction (6R)-5,10-methylene-5,6,7,8-tetrahydrofolate + glycine + H2O = (6S)-5,6,7,8-tetrahydrofolate + L-serine. Its pathway is one-carbon metabolism; tetrahydrofolate interconversion. It functions in the pathway amino-acid biosynthesis; glycine biosynthesis; glycine from L-serine: step 1/1. In terms of biological role, catalyzes the reversible interconversion of serine and glycine with tetrahydrofolate (THF) serving as the one-carbon carrier. This reaction serves as the major source of one-carbon groups required for the biosynthesis of purines, thymidylate, methionine, and other important biomolecules. Also exhibits THF-independent aldolase activity toward beta-hydroxyamino acids, producing glycine and aldehydes, via a retro-aldol mechanism. The polypeptide is Serine hydroxymethyltransferase (Crocosphaera subtropica (strain ATCC 51142 / BH68) (Cyanothece sp. (strain ATCC 51142))).